The sequence spans 64 residues: Alpha-like toxin BmK M2 (64 aa).

Residues 2-64 (RDAYIAKPHN…VPIRVPGKCH (63 aa)) enclose the LCN-type CS-alpha/beta domain. 4 disulfide bridges follow: Cys12-Cys63, Cys16-Cys36, Cys22-Cys46, and Cys26-Cys48.

It belongs to the long (4 C-C) scorpion toxin superfamily. Sodium channel inhibitor family. Alpha subfamily. In terms of tissue distribution, expressed by the venom gland.

The protein resides in the secreted. Its function is as follows. Alpha toxins bind voltage-independently at site-3 of sodium channels (Nav) and inhibit the inactivation of the activated channels, thereby blocking neuronal transmission. This toxin is active against both mammals and insects, and is classified as an alpha-like toxin. This chain is Alpha-like toxin BmK M2, found in Olivierus martensii (Manchurian scorpion).